The sequence spans 299 residues: Cysteine synthase B (299 aa).

The residue at position 45 (Lys-45) is an N6-(pyridoxal phosphate)lysine. Residues Asn-75, 178–182 (GTTGT), and Ser-259 contribute to the pyridoxal 5'-phosphate site.

It belongs to the cysteine synthase/cystathionine beta-synthase family. Requires pyridoxal 5'-phosphate as cofactor.

The enzyme catalyses O-acetyl-L-serine + hydrogen sulfide = L-cysteine + acetate. It participates in amino-acid biosynthesis; L-cysteine biosynthesis; L-cysteine from L-serine: step 2/2. The protein is Cysteine synthase B (cysM) of Pseudomonas aeruginosa (strain ATCC 15692 / DSM 22644 / CIP 104116 / JCM 14847 / LMG 12228 / 1C / PRS 101 / PAO1).